The sequence spans 948 residues: Phosphatidylinositol-glycan-specific phospholipase D (948 aa).

The first 24 residues, 1 to 24 (MKNKIILLWLLLIVILCTISNVKG), serve as a signal peptide directing secretion. N-linked (GlcNAc...) asparagine glycosylation is found at Asn-39, Asn-78, Asn-148, Asn-300, Asn-433, Asn-452, Asn-506, and Asn-535. FG-GAP repeat units lie at residues 451–512 (TNFT…SVTI), 526–588 (QVAT…NPAG), 596–656 (LPSI…RISG), and 663–724 (DADY…LNSF). Asn-749 and Asn-788 each carry an N-linked (GlcNAc...) asparagine glycan. FG-GAP repeat units lie at residues 799 to 861 (NLLL…LTND) and 895 to 948 (SSGG…NIFQ).

This sequence belongs to the GPLD1 family. It depends on Ca(2+) as a cofactor.

It localises to the secreted. The enzyme catalyses a 6-(alpha-D-glucosaminyl)-1-(1,2-diacyl-sn-glycero-3-phospho)-1D-myo-inositol + H2O = 6-(alpha-D-glucosaminyl)-1D-myo-inositol + a 1,2-diacyl-sn-glycero-3-phosphate + H(+). Hydrolyzes the inositol phosphate linkage in proteins anchored by phosphatidylinositol glycans (GPI-anchor) thus releasing these proteins from the membrane. May also cleave GPI anchor intermediates intracellularly. The polypeptide is Phosphatidylinositol-glycan-specific phospholipase D (pldG) (Dictyostelium discoideum (Social amoeba)).